The sequence spans 474 residues: Trehalose-6-phosphate synthase (474 aa).

A D-glucose 6-phosphate-binding site is contributed by Arg-10. 22-23 (GG) lines the UDP-alpha-D-glucose pocket. Positions 77 and 131 each coordinate D-glucose 6-phosphate. UDP-alpha-D-glucose-binding residues include Arg-263 and Lys-268. Arg-301 provides a ligand contact to D-glucose 6-phosphate. Residues Phe-340 and 366 to 370 (LVAKE) each bind UDP-alpha-D-glucose.

Belongs to the glycosyltransferase 20 family. As to quaternary structure, homotetramer.

It carries out the reaction D-glucose 6-phosphate + UDP-alpha-D-glucose = alpha,alpha-trehalose 6-phosphate + UDP + H(+). It participates in glycan biosynthesis; trehalose biosynthesis. Probably involved in the osmoprotection via the biosynthesis of trehalose. Catalyzes the transfer of glucose from UDP-alpha-D-glucose (UDP-Glc) to D-glucose 6-phosphate (Glc-6-P) to form trehalose-6-phosphate. Acts with retention of the anomeric configuration of the UDP-sugar donor. The protein is Trehalose-6-phosphate synthase of Klebsiella pneumoniae subsp. pneumoniae (strain ATCC 700721 / MGH 78578).